An 82-amino-acid polypeptide reads, in one-letter code: ATP synthase subunit c, chloroplastic (82 aa).

N-formylmethionine is present on M1. 2 helical membrane-spanning segments follow: residues 3–23 (PIVAATSVVSAGLAVGLAAIG) and 57–77 (FAFMESLTIYGLVVALALLFA).

Belongs to the ATPase C chain family. In terms of assembly, F-type ATPases have 2 components, F(1) - the catalytic core - and F(0) - the membrane proton channel. F(1) has five subunits: alpha(3), beta(3), gamma(1), delta(1), epsilon(1). F(0) has four main subunits: a(1), b(1), b'(1) and c(10-14). The alpha and beta chains form an alternating ring which encloses part of the gamma chain. F(1) is attached to F(0) by a central stalk formed by the gamma and epsilon chains, while a peripheral stalk is formed by the delta, b and b' chains.

The protein resides in the plastid. It is found in the chloroplast thylakoid membrane. In terms of biological role, f(1)F(0) ATP synthase produces ATP from ADP in the presence of a proton or sodium gradient. F-type ATPases consist of two structural domains, F(1) containing the extramembraneous catalytic core and F(0) containing the membrane proton channel, linked together by a central stalk and a peripheral stalk. During catalysis, ATP synthesis in the catalytic domain of F(1) is coupled via a rotary mechanism of the central stalk subunits to proton translocation. Key component of the F(0) channel; it plays a direct role in translocation across the membrane. A homomeric c-ring of between 10-14 subunits forms the central stalk rotor element with the F(1) delta and epsilon subunits. This Chlamydomonas reinhardtii (Chlamydomonas smithii) protein is ATP synthase subunit c, chloroplastic.